Reading from the N-terminus, the 285-residue chain is NAD kinase (285 aa).

Asp-66 functions as the Proton acceptor in the catalytic mechanism. NAD(+) contacts are provided by residues Asp-66–Gly-67, Asn-137–Asp-138, Arg-148, Arg-165, Asp-167, and Thr-178–Ser-183.

It belongs to the NAD kinase family. A divalent metal cation is required as a cofactor.

Its subcellular location is the cytoplasm. It catalyses the reaction NAD(+) + ATP = ADP + NADP(+) + H(+). In terms of biological role, involved in the regulation of the intracellular balance of NAD and NADP, and is a key enzyme in the biosynthesis of NADP. Catalyzes specifically the phosphorylation on 2'-hydroxyl of the adenosine moiety of NAD to yield NADP. This Prosthecochloris aestuarii (strain DSM 271 / SK 413) protein is NAD kinase.